Here is a 368-residue protein sequence, read N- to C-terminus: Zinc finger protein 24 (368 aa).

Residue lysine 22 forms a Glycyl lysine isopeptide (Lys-Gly) (interchain with G-Cter in SUMO2) linkage. Lysine 27 participates in a covalent cross-link: Glycyl lysine isopeptide (Lys-Gly) (interchain with G-Cter in SUMO1); alternate. Lysine 27 participates in a covalent cross-link: Glycyl lysine isopeptide (Lys-Gly) (interchain with G-Cter in SUMO2); alternate. In terms of domain architecture, SCAN box spans 52-134; the sequence is RQRFRQFGYQ…TVLEDLESEL (83 aa). Phosphoserine occurs at positions 132 and 142. Glycyl lysine isopeptide (Lys-Gly) (interchain with G-Cter in SUMO2) cross-links involve residues lysine 147, lysine 177, and lysine 236. The segment at 251–273 adopts a C2H2-type 1 zinc-finger fold; that stretch reads HICDECGKHFSQGSALILHQRIH. A necessary and sufficient for nuclear localization region spans residues 251-301; it reads HICDECGKHFSQGSALILHQRIHSGEKPYGCVECGKAFSRSSILVQHQRVH. Phosphoserine is present on serine 274. Residues lysine 277 and lysine 286 each participate in a glycyl lysine isopeptide (Lys-Gly) (interchain with G-Cter in SUMO2) cross-link. 3 consecutive C2H2-type zinc fingers follow at residues 279–301, 307–329, and 335–357; these read YGCV…QRVH, YKCL…QRIH, and YECV…QRRH. A Phosphoserine modification is found at serine 292. Tyrosine 335 carries the post-translational modification Phosphotyrosine. Residues lysine 361 and lysine 367 each participate in a glycyl lysine isopeptide (Lys-Gly) (interchain with G-Cter in SUMO2) cross-link.

The protein belongs to the krueppel C2H2-type zinc-finger protein family. Post-translationally, sumoylated.

Its subcellular location is the nucleus. Its function is as follows. Transcription factor required for myelination of differentiated oligodendrocytes. Required for the conversion of oligodendrocytes from the premyelinating to the myelinating state. In the developing central nervous system (CNS), involved in the maintenance in the progenitor stage by promoting the cell cycle. Specifically binds to the 5'-TCAT-3' DNA sequence. Has transcription repressor activity in vitro. This Rattus norvegicus (Rat) protein is Zinc finger protein 24 (Znf24).